A 184-amino-acid polypeptide reads, in one-letter code: Ribosome maturation factor RimM (184 aa).

Residues 101-174 form the PRC barrel domain; the sequence is PDEYYDHQLV…RVVIADRPGL (74 aa).

The protein belongs to the RimM family. Binds ribosomal protein uS19.

It is found in the cytoplasm. Its function is as follows. An accessory protein needed during the final step in the assembly of 30S ribosomal subunit, possibly for assembly of the head region. Essential for efficient processing of 16S rRNA. May be needed both before and after RbfA during the maturation of 16S rRNA. It has affinity for free ribosomal 30S subunits but not for 70S ribosomes. The chain is Ribosome maturation factor RimM from Nocardioides sp. (strain ATCC BAA-499 / JS614).